We begin with the raw amino-acid sequence, 176 residues long: ATP-dependent protease subunit HslV (176 aa).

T5 is an active-site residue. 3 residues coordinate Na(+): S161, C164, and T167.

This sequence belongs to the peptidase T1B family. HslV subfamily. In terms of assembly, a double ring-shaped homohexamer of HslV is capped on each side by a ring-shaped HslU homohexamer. The assembly of the HslU/HslV complex is dependent on binding of ATP.

Its subcellular location is the cytoplasm. The enzyme catalyses ATP-dependent cleavage of peptide bonds with broad specificity.. Its activity is regulated as follows. Allosterically activated by HslU binding. In terms of biological role, protease subunit of a proteasome-like degradation complex believed to be a general protein degrading machinery. The polypeptide is ATP-dependent protease subunit HslV (Thermoanaerobacter sp. (strain X514)).